Reading from the N-terminus, the 2869-residue chain is uncharacterized protein (2869 aa).

The span at 1 to 10 (MNINRNNIND) shows a compositional bias: low complexity. 13 disordered regions span residues 1 to 132 (MNIN…SSNK), 171 to 349 (NNNN…DNYR), 380 to 485 (FNES…TSSS), 498 to 517 (KEKHNKKHENGDISESKPKK), 690 to 812 (NQNQ…NQNQ), 860 to 1074 (INNN…INSN), 1108 to 1175 (INNI…NSNS), 1188 to 1216 (SNSNGFNNNNSNDQRNIDSSSNSDIVDVD), 1224 to 1243 (VFIVDDTSSNKSNRASSVKT), 1340 to 1448 (ESNS…GNNI), 1476 to 1704 (IDNC…SNYY), 1731 to 1832 (NSNS…NEGF), and 2725 to 2773 (DRVR…NNNE). The span at 14-25 (HSTSFNDNFDSF) shows a compositional bias: polar residues. Composition is skewed to low complexity over residues 26–124 (GNQN…NPKN), 171–348 (NNNN…YDNY), 388–414 (NNNTNFNNQTFGNNNKNQNNDNNLNNN), 421–446 (YYDNQYNSNIDNIGNSDDSIGGQTNK), and 454–478 (KNNNNNNNNNNNNNNNNNNNNNSNN). The segment covering 505-514 (HENGDISESK) has biased composition (basic and acidic residues). 2 stretches are compositionally biased toward low complexity: residues 690–707 (NQNQKQNQNQNQKNQNHQ) and 714–749 (PQRQRYFPQDKPQNQNNQPPLQHQHQYQYQYQNQDQ). The span at 750 to 763 (YQDHDHEHEHDHDQ) shows a compositional bias: basic and acidic residues. Low complexity predominate over residues 764–781 (NQNQNQNQHQSRNQNQDQ). Residues 782–795 (YQDHDHEHEHDHDQ) show a composition bias toward basic and acidic residues. Low complexity-rich tracts occupy residues 796–812 (NQNQNQYQSQNQQNQNQ), 860–891 (INNNNNNNNNNNNNNNNYYNYNQNQNQNQSQN), 898–911 (DNRINSNNSLSSRD), 921–991 (CDFN…SFNN), and 1000–1074 (NNHN…INSN). Low complexity predominate over residues 1188–1212 (SNSNGFNNNNSNDQRNIDSSSNSDI). Over residues 1230-1243 (TSSNKSNRASSVKT) the composition is skewed to polar residues. Low complexity-rich tracts occupy residues 1377-1448 (DNGN…GNNI) and 1476-1639 (IDNC…NDND). Positions 1640-1659 (IGNDFDNDNDNDSYIDDDNN) are enriched in acidic residues. 3 stretches are compositionally biased toward low complexity: residues 1660–1704 (VYDN…SNYY), 1731–1823 (NSNS…NNNS), and 2739–2754 (SSSGSSIGNPSSSGGS). Over residues 2758–2773 (NLDDSENESDSENNNE) the composition is skewed to acidic residues.

This is an uncharacterized protein from Dictyostelium discoideum (Social amoeba).